Reading from the N-terminus, the 576-residue chain is Ecdysone receptor (576 aa).

A modulating region spans residues M1–L162. The interval C87–P154 is disordered. Positions Q91–L106 are enriched in low complexity. Over residues P107 to T117 the composition is skewed to pro residues. 2 NR C4-type zinc fingers span residues C163–C183 and C199–C223. The segment at residues C163–P235 is a DNA-binding region (nuclear receptor). Residues E245–I269 are disordered. One can recognise an NR LBD domain in the interval N314 to D548.

This sequence belongs to the nuclear hormone receptor family. NR1 subfamily.

It is found in the nucleus. Functionally, receptor for ecdysone. Binds to ecdysone response elements (ECRES). This Heliothis virescens (Tobacco budworm moth) protein is Ecdysone receptor (EcR).